Reading from the N-terminus, the 68-residue chain is Protein SlyX homolog (68 aa).

It belongs to the SlyX family.

This Pseudomonas fluorescens (strain SBW25) protein is Protein SlyX homolog.